Reading from the N-terminus, the 177-residue chain is Translation initiation factor IF-3 (177 aa).

It belongs to the IF-3 family. Monomer.

The protein localises to the cytoplasm. In terms of biological role, IF-3 binds to the 30S ribosomal subunit and shifts the equilibrium between 70S ribosomes and their 50S and 30S subunits in favor of the free subunits, thus enhancing the availability of 30S subunits on which protein synthesis initiation begins. The chain is Translation initiation factor IF-3 from Elusimicrobium minutum (strain Pei191).